Consider the following 493-residue polypeptide: WAS/WASL-interacting protein family member 1 (493 aa).

Over residues 1–14 (MPVPPPPAPPPPPT) the composition is skewed to pro residues. Residues 1–493 (MPVPPPPAPP…GAPPLPPIPR (493 aa)) are disordered. Polar residues predominate over residues 21-31 (EKPTLNKTEQA). Positions 32 to 49 (GRNALLSDISKGKKLKKT) constitute a WH2 domain. Arginine 33 carries the post-translational modification Asymmetric dimethylarginine. Residues 45–48 (KLKK) are binds actin. Residues 67-105 (ASAGGYGGGGGGGGGGGGGGGGSGGNFGGGGPPGLGGLF) are compositionally biased toward gly residues. 2 positions are modified to omega-N-methylarginine: arginine 126 and arginine 135. Pro residues-rich tracts occupy residues 142–155 (FSPP…PAPS), 162–175 (PPEP…PPRP), and 183–195 (SLPP…PRPV). Serine 143 is subject to Phosphoserine. Serine 227 bears the Phosphoserine mark. 3 stretches are compositionally biased toward pro residues: residues 239 to 248 (FPRPPLPPTP), 274 to 290 (VPPP…PSTP), and 298 to 315 (APPP…PLPP). Serine 330 and serine 340 each carry phosphoserine. A compositionally biased stretch (pro residues) spans 336-361 (PPLPSPGRSGPLPPPPSERPPPPVRD). XRSGPXPPXP motif repeat units lie at residues 342–351 (GRSGPLPPPP), 364–373 (GRSGPLPPPP), and 400–409 (PRSGPRPPLP). Positions 403–424 (GPRPPLPPDRPGAGAPPPPPPS) are enriched in pro residues. Over residues 425–434 (TSVRNGFQDS) the composition is skewed to polar residues. The segment covering 470-484 (ARNESRSGSNRRERG) has biased composition (basic and acidic residues).

Belongs to the verprolin family. In terms of assembly, binds to WAS within the N-terminal region, at a site distinct from the CDC42-binding site. Binds profilin and actin. Binds to WASL. Interacts with DBNL. Interacts with DBNL. Interacts with FNBP1L (via the SH3 domain).

Its subcellular location is the cytoplasmic vesicle. The protein resides in the cytoplasm. It localises to the cytoskeleton. It is found in the cell projection. The protein localises to the ruffle. Plays a role in the reorganization of the actin cytoskeleton. Contributes with NCK1 and GRB2 in the recruitment and activation of WASL. May participate in regulating the subcellular localization of WASL, resulting in the disassembly of stress fibers in favor of filopodia formation. Plays a role in the formation of cell ruffles. This chain is WAS/WASL-interacting protein family member 1 (Wipf1), found in Mus musculus (Mouse).